A 575-amino-acid polypeptide reads, in one-letter code: Transcription factor collier (575 aa).

The interval 79–82 is interaction with DNA; it reads RKSN. The C5-type zinc-finger motif lies at 167 to 186; the sequence is CRVLLTHEVMCSRCCDKKSC. Interaction with DNA regions lie at residues 213-220 and 252-255; these read NCLKNAGN and NNSK. A disordered region spans residues 255–278; sequence KHGRRAKRLDTTEGTGNTSLSISG. Over residues 266-276 the composition is skewed to polar residues; it reads TEGTGNTSLSI. Residues 299–382 enclose the IPT/TIG domain; the sequence is PCIKAISPSE…KGSPGRFVYV (84 aa). 2 disordered regions span residues 456–492 and 546–575; these read GQWTEDDYQRAQSSSVSPRGGYCSSASTPHSSGGSYG and AATAHPHHHYPHPHQPWHNPAVSAATAAAV. A compositionally biased stretch (low complexity) spans 479–492; the sequence is SSASTPHSSGGSYG. Residues 546–557 are compositionally biased toward basic residues; that stretch reads AATAHPHHHYPH. Positions 561-575 are enriched in low complexity; that stretch reads PWHNPAVSAATAAAV.

It belongs to the COE family. In terms of tissue distribution, its expression at the blastoderm stage is restricted to a single stripe of cells corresponding to part of the intercalary and mandibular segment primordia, possibly parasegment O.

Its subcellular location is the nucleus. May act as a 'second-level regulator' of head patterning. Required for establishment of the PS(-1)/PS0 parasegmental border and formation of the intercalary segment. Required for expression of the segment polarity genes hedgehog, engrailed and wingless, and the segment-identity genes CAP and collar in the intercalary segment. Required at the onset of the gastrulation for the correct formation of the mandibular segment. In Drosophila melanogaster (Fruit fly), this protein is Transcription factor collier (kn).